The primary structure comprises 63 residues: MKAQELRAKTVEELNAELANLAGEQFKLRMQAATGQLQQTHQLKQVRRNIAQVKTVLTEKAGE.

Belongs to the universal ribosomal protein uL29 family.

This is Large ribosomal subunit protein uL29 from Mannheimia succiniciproducens (strain KCTC 0769BP / MBEL55E).